Reading from the N-terminus, the 200-residue chain is Prolactin-2 (200 aa).

The signal sequence occupies residues 1–23 (MRQRRISGSNLMMVLCVVAMCRA). Cystine bridges form between Cys-64–Cys-173 and Cys-190–Cys-200.

The protein belongs to the somatotropin/prolactin family.

The protein localises to the secreted. This chain is Prolactin-2 (prl2), found in Oreochromis mossambicus (Mozambique tilapia).